We begin with the raw amino-acid sequence, 424 residues long: 3-ketoacyl-CoA thiolase, peroxisomal (424 aa).

Residues 1 to 26 (MQRLQVVLGHLRGPADSGWMPQAAPC) constitute a peroxisome transit peptide. The segment at 1–26 (MQRLQVVLGHLRGPADSGWMPQAAPC) is PTS2-type peroxisomal targeting signal. Residues T59 and T60 each carry the phosphothreonine modification. The Acyl-thioester intermediate role is filled by C123. Residues H377 and C408 each act as proton acceptor in the active site.

It belongs to the thiolase-like superfamily. Thiolase family. Homodimer. Interacts (via PTS2-type peroxisomal targeting signal region) with PEX7; leading to its translocation into peroxisomes.

It is found in the peroxisome. The enzyme catalyses an acyl-CoA + acetyl-CoA = a 3-oxoacyl-CoA + CoA. The catalysed reaction is 2 acetyl-CoA = acetoacetyl-CoA + CoA. It carries out the reaction tetradecanoyl-CoA + acetyl-CoA = 3-oxohexadecanoyl-CoA + CoA. It catalyses the reaction hexanoyl-CoA + acetyl-CoA = 3-oxooctanoyl-CoA + CoA. The enzyme catalyses 3-oxohexadecanedioyl-CoA + CoA = tetradecanedioyl-CoA + acetyl-CoA. The catalysed reaction is 3-oxo-(6Z,9Z,12Z,15Z,18Z,21Z)-tetracosahexaenoyl-CoA + CoA = (4Z,7Z,10Z,13Z,16Z,19Z)-docosahexaenoyl-CoA + acetyl-CoA. Its pathway is lipid metabolism; peroxisomal fatty acid beta-oxidation. Responsible for the thiolytic cleavage of straight chain 3-keto fatty acyl-CoAs (3-oxoacyl-CoAs). Plays an important role in fatty acid peroxisomal beta-oxidation. Catalyzes the cleavage of short, medium, long, and very long straight chain 3-oxoacyl-CoAs. The chain is 3-ketoacyl-CoA thiolase, peroxisomal from Homo sapiens (Human).